We begin with the raw amino-acid sequence, 694 residues long: Prolyl 3-hydroxylase 2 (694 aa).

The first 23 residues, 1 to 23, serve as a signal peptide directing secretion; it reads MAPGSRSWGAVLLLAAMLPAACG. TPR repeat units follow at residues 35–68, 136–169, 196–229, and 292–325; these read FDALYASGVEAYYGGDFAGAARCLEQALRSRREL, RVPYSYLQRAYIQLNKLEEAANAAHTFFMANPEH, HMEDYSAGVRHYDKEEYGLAITFLERALEGYYAE, and PLHYDYLQFAYYRVGDYVKALECARSYLLFHPDD. Positions 386–418 form a coiled coil; the sequence is KRYGARQDEHSVPSSISSEPEDGPRLSLTKKPT. The disordered stretch occupies residues 395–427; that stretch reads HSVPSSISSEPEDGPRLSLTKKPTPKPDRELKE. 2 N-linked (GlcNAc...) asparagine glycosylation sites follow: asparagine 446 and asparagine 535. In terms of domain architecture, Fe2OG dioxygenase spans 543–657; sequence THLVCRTALS…RCAVALWFTL (115 aa). The Fe cation site is built by histidine 566, aspartate 568, and histidine 638. Arginine 648 is a catalytic residue. The Prevents secretion from ER motif lies at 691–694; it reads KDEL.

The protein belongs to the leprecan family. Requires Fe cation as cofactor. L-ascorbate serves as cofactor.

The protein resides in the endoplasmic reticulum. It is found in the sarcoplasmic reticulum. It localises to the golgi apparatus. It catalyses the reaction L-prolyl-[collagen] + 2-oxoglutarate + O2 = trans-3-hydroxy-L-prolyl-[collagen] + succinate + CO2. Prolyl 3-hydroxylase that catalyzes the post-translational formation of 3-hydroxyproline on collagens. Contributes to proline 3-hydroxylation of collagen COL4A1 and COL1A1 in tendons, the eye sclera and in the eye lens capsule. Has high activity with the type IV collagen COL4A1, and lower activity with COL1A1. Catalyzes hydroxylation of the first Pro in Gly-Pro-Hyp sequences where Hyp is 4-hydroxyproline. Has no activity on substrates that lack 4-hydroxyproline in the third position. The polypeptide is Prolyl 3-hydroxylase 2 (Gallus gallus (Chicken)).